A 241-amino-acid polypeptide reads, in one-letter code: DNA repair protein RecO (241 aa).

It belongs to the RecO family.

Its function is as follows. Involved in DNA repair and RecF pathway recombination. This Ruegeria sp. (strain TM1040) (Silicibacter sp.) protein is DNA repair protein RecO.